Here is a 369-residue protein sequence, read N- to C-terminus: Quinolinate synthase (369 aa).

Iminosuccinate contacts are provided by His-47 and Ser-64. Cys-111 contributes to the [4Fe-4S] cluster binding site. Iminosuccinate-binding positions include 142–144 and Ser-163; that span reads YVN. Cys-231 serves as a coordination point for [4Fe-4S] cluster. Residues 257–259 and Thr-274 each bind iminosuccinate; that span reads HPE. Cys-321 contacts [4Fe-4S] cluster.

The protein belongs to the quinolinate synthase family. Type 3 subfamily. [4Fe-4S] cluster is required as a cofactor.

It localises to the cytoplasm. The enzyme catalyses iminosuccinate + dihydroxyacetone phosphate = quinolinate + phosphate + 2 H2O + H(+). It functions in the pathway cofactor biosynthesis; NAD(+) biosynthesis; quinolinate from iminoaspartate: step 1/1. Functionally, catalyzes the condensation of iminoaspartate with dihydroxyacetone phosphate to form quinolinate. In Bacillus pumilus (strain SAFR-032), this protein is Quinolinate synthase.